Here is a 194-residue protein sequence, read N- to C-terminus: UPF0232 protein MSMEG_0004/MSMEI_0006 (194 aa).

Residues 1–14 (MTGPFDDDGPEEDA) show a composition bias toward acidic residues. Positions 1–81 (MTGPFDDDGP…GPGPDARDPQ (81 aa)) are disordered. The span at 30–52 (DLVRRTLEEARGAARSQGKDVGR) shows a compositional bias: basic and acidic residues.

Belongs to the UPF0232 family.

The chain is UPF0232 protein MSMEG_0004/MSMEI_0006 from Mycolicibacterium smegmatis (strain ATCC 700084 / mc(2)155) (Mycobacterium smegmatis).